Consider the following 1170-residue polypeptide: Integrin alpha-2 (1170 aa).

An N-terminal signal peptide occupies residues Pro1 to Ala18. Residues Tyr19 to Thr1121 lie on the Extracellular side of the membrane. 2 FG-GAP repeats span residues Leu23–Cys81 and Thr90–Ser150. A disulfide bridge links Cys72 with Cys81. N-linked (GlcNAc...) asparagine glycans are attached at residues Asn94, Asn101, and Asn332. The VWFA domain maps to Trp177–Glu354. FG-GAP repeat units follow at residues Gly355–Ser409, Ala412–Asn464, Thr466–Trp528, His529–Leu587, and Gln591–Lys653. N-linked (GlcNAc...) asparagine glycans are attached at residues Asn421, Asn449, and Asn464. The short motif at Arg472–Asp474 is the Cell attachment site element. Ca(2+) contacts are provided by Asp488, Asn490, Asp492, Asp496, Asp552, Asn554, Asp556, Asp560, Asp616, Asn618, Asp620, and Asp624. Cys669 and Cys726 are oxidised to a cystine. Residues Asn688 and Asn748 are each glycosylated (N-linked (GlcNAc...) asparagine). 2 disulfides stabilise this stretch: Cys778-Cys784 and Cys854-Cys865. Asn945 carries N-linked (GlcNAc...) asparagine glycosylation. Disulfide bonds link Cys1008/Cys1039 and Cys1044/Cys1049. N-linked (GlcNAc...) asparagine glycosylation is found at Asn1063 and Asn1070. Residues Gly1122 to Trp1143 traverse the membrane as a helical segment. At Lys1144–Ser1170 the chain is on the cytoplasmic side. Residues Gly1146–Arg1150 carry the GFFKR motif motif.

This sequence belongs to the integrin alpha chain family. In terms of assembly, heterodimer of an alpha and a beta subunit. Alpha-2 associates with beta-1. Interacts with HPS5 and RAB21.

The protein localises to the membrane. Functionally, integrin alpha-2/beta-1 is a receptor for laminin, collagen, collagen C-propeptides, fibronectin and E-cadherin. It recognizes the proline-hydroxylated sequence G-F-P-G-E-R in collagen. It is responsible for adhesion of platelets and other cells to collagens, modulation of collagen and collagenase gene expression, force generation and organization of newly synthesized extracellular matrix. The protein is Integrin alpha-2 (ITGA2) of Bos taurus (Bovine).